A 712-amino-acid polypeptide reads, in one-letter code: TIR domain-containing adapter molecule 1 (712 aa).

Residues 1-153 (MACTGPSLPS…CGWDIAGDPG (153 aa)) form a TRIF-NTD region. The TRAF6-binding signature appears at 84-91 (EDPEEPPD). A pLxIS motif motif is present at residues 207 to 210 (LEIS). Serine 210 is subject to Phosphoserine; by TBK1. Disordered regions lie at residues 216-316 (PFLS…SLPL) and 336-384 (LSVE…LFPS). Lysine 229 is covalently cross-linked (Glycyl lysine isopeptide (Lys-Gly) (interchain with G-Cter in ubiquitin)). A TRAF6-binding motif is present at residues 248–255 (QEPEEMSW). Residues 265-275 (PELPSSPPPGL) are compositionally biased toward pro residues. The TRAF6-binding motif lies at 299–309 (NYPVECTEGSA). Positions 347–369 (KPCPPTPTTPETSPPPPPPPPSS) are enriched in pro residues. The TIR domain maps to 393–553 (KFYNFVILHA…QDTRALREQS (161 aa)). The tract at residues 512 to 712 (RLDEHSQIFA…APEDKTQEAE (201 aa)) is sufficient to induce apoptosis. 2 stretches are compositionally biased toward pro residues: residues 620 to 633 (PFPT…PPPL) and 640 to 649 (TPPPPSPQPA). The interval 620–677 (PFPTWPGCPQPPPLHAWQAGTPPPPSPQPAAFPQSLPFPQSPAFPTASPAPPQSPGLQ) is disordered. A compositionally biased stretch (low complexity) spans 650–666 (AFPQSLPFPQSPAFPTA).

Homodimer. Found in a multi-helicase-TICAM1 complex at least composed of DHX36, DDX1, DDX21 and TICAM1; this complex exists in resting cells with or without poly(I:C) RNA ligand stimulation. Interacts (via TIR domain) with DDX21 (via C-terminus). Interacts (via TIR domain) with DHX36 (via C-terminus). Interacts with AZI2 and IRF7. Interacts with TICAM2 in TLR4 recruitment. Interaction with PIAS4 inhibits the TICAM1-induced NF-kappa-B, IRF and IFNB1 activation. Interacts with IKBKB and IKBKE. Interaction with SARM1 blocks TICAM1-dependent transcription factor activation. Interacts with TRAF3. Interacts (when phosphorylated) with IRF3; following activation and phosphorylation on the pLxIS motif by TBK1, recruits IRF3. Interacts with TBK1, TRAF6 and RIPK1 and these interactions are enhanced in the presence of WDFY1. Interacts with TRAFD1. Interacts with UBQLN1 (via UBA domain). Interacts with TLR4. Interacts with WDFY1 in response to poly(I:C). Interacts (via the TIR domain) with TLR3 in response to poly(I:C) and this interaction is enhanced in the presence of WDFY1. Interacts with TRIM56. Component of a multi-helicase-TICAM1 complex that acts as a cytoplasmic sensor of viral double-stranded RNA (dsRNA) and plays a role in the activation of a cascade of antiviral responses including the induction of pro-inflammatory cytokines. Interacts (via the TIR domain) with TLR5. Interacts with TRIM8. Interacts with TAX1BP1 and TRIM32; these interactions target TICAM1 to TAX1BP1-mediated selective autophagic degradation. Interacts with DDX50. As to quaternary structure, (Microbial infection) Interacts with hepatitis C virus (HCV) NS3/4A protease; this interaction leads to TICAM1 cleavage, thereby disrupting TLR3 signaling and preventing the establishment of an antiviral state. In terms of assembly, (Microbial infection) Interacts with Seneca Valley virus protease 3C; this interaction allows the cleavage of TICAM1/TRIF and subsequent suppression of host innate immunity. (Microbial infection) Interacts (via C-terminus) with coxsackievirus B3 (CVB3) protease 3C. Post-translationally, phosphorylated by TBK1. Following activation, phosphorylated by TBK1 at Ser-210 in the pLxIS motif. The phosphorylated pLxIS motif constitutes an IRF3-binding motif, leading to recruitment of the transcription factor IRF3 to induce type-I interferons and other cytokines. In terms of processing, polyubiquitinated at Lys-229 by TRIM38 with 'Lys-48'-linked chains, leading to proteasomal degradation. Polyubiquitinated with 'Lys-6'- and 'Lys-33'-linked chains in a TRIM8-dependent manner; ubiquitination disrupts the interaction with TBK1 and subsequent interferon production. (Microbial infection) Cleaved and degraded by hepatitis A virus (HAV) protein 3CD allowing the virus to disrupt host TLR3 signaling. Post-translationally, (Microbial infection) Cleaved by CVB3 protease 3C allowing the virus to disrupt host TLR3 signaling. In terms of processing, (Microbial infection) Cleaved by Seneca Valley virus protease 3C allowing the virus to disrupt host TLR3 signaling. (Microbial infection) Cleaved by protease 3C of human enterovirus D68 (EV68) allowing the virus to disrupt host TLR3 signaling. Post-translationally, (Microbial infection) Cleaved by HCV protease NS3/4A, thereby disrupting TLR3 signaling and preventing the establishment of an antiviral state. In terms of tissue distribution, ubiquitously expressed but with higher levels in liver.

It is found in the cytoplasmic vesicle. The protein localises to the autophagosome. It localises to the cytoplasm. Its subcellular location is the cytosol. The protein resides in the mitochondrion. Functionally, involved in innate immunity against invading pathogens. Adapter used by TLR3, TLR4 (through TICAM2) and TLR5 to mediate NF-kappa-B and interferon-regulatory factor (IRF) activation, and to induce apoptosis. Ligand binding to these receptors results in TRIF recruitment through its TIR domain. Distinct protein-interaction motifs allow recruitment of the effector proteins TBK1, TRAF6 and RIPK1, which in turn, lead to the activation of transcription factors IRF3 and IRF7, NF-kappa-B and FADD respectively. Phosphorylation by TBK1 on the pLxIS motif leads to recruitment and subsequent activation of the transcription factor IRF3 to induce expression of type I interferon and exert a potent immunity against invading pathogens. Component of a multi-helicase-TICAM1 complex that acts as a cytoplasmic sensor of viral double-stranded RNA (dsRNA) and plays a role in the activation of a cascade of antiviral responses including the induction of pro-inflammatory cytokines. The sequence is that of TIR domain-containing adapter molecule 1 (TICAM1) from Homo sapiens (Human).